Consider the following 402-residue polypeptide: 4-hydroxy-3-methylbut-2-enyl diphosphate reductase (402 aa).

Residue Cys-66 participates in [4Fe-4S] cluster binding. Residue His-96 participates in (2E)-4-hydroxy-3-methylbut-2-enyl diphosphate binding. His-96 provides a ligand contact to dimethylallyl diphosphate. His-96 serves as a coordination point for isopentenyl diphosphate. Cys-157 contributes to the [4Fe-4S] cluster binding site. A (2E)-4-hydroxy-3-methylbut-2-enyl diphosphate-binding site is contributed by His-185. His-185 is a dimethylallyl diphosphate binding site. His-185 is a binding site for isopentenyl diphosphate. The Proton donor role is filled by Glu-187. A (2E)-4-hydroxy-3-methylbut-2-enyl diphosphate-binding site is contributed by Thr-250. Cys-288 lines the [4Fe-4S] cluster pocket. Ser-317, Ser-318, Asn-319, and Ser-379 together coordinate (2E)-4-hydroxy-3-methylbut-2-enyl diphosphate. Dimethylallyl diphosphate-binding residues include Ser-317, Ser-318, Asn-319, and Ser-379. Isopentenyl diphosphate-binding residues include Ser-317, Ser-318, Asn-319, and Ser-379.

It belongs to the IspH family. [4Fe-4S] cluster is required as a cofactor.

It catalyses the reaction isopentenyl diphosphate + 2 oxidized [2Fe-2S]-[ferredoxin] + H2O = (2E)-4-hydroxy-3-methylbut-2-enyl diphosphate + 2 reduced [2Fe-2S]-[ferredoxin] + 2 H(+). The catalysed reaction is dimethylallyl diphosphate + 2 oxidized [2Fe-2S]-[ferredoxin] + H2O = (2E)-4-hydroxy-3-methylbut-2-enyl diphosphate + 2 reduced [2Fe-2S]-[ferredoxin] + 2 H(+). It functions in the pathway isoprenoid biosynthesis; dimethylallyl diphosphate biosynthesis; dimethylallyl diphosphate from (2E)-4-hydroxy-3-methylbutenyl diphosphate: step 1/1. It participates in isoprenoid biosynthesis; isopentenyl diphosphate biosynthesis via DXP pathway; isopentenyl diphosphate from 1-deoxy-D-xylulose 5-phosphate: step 6/6. In terms of biological role, catalyzes the conversion of 1-hydroxy-2-methyl-2-(E)-butenyl 4-diphosphate (HMBPP) into a mixture of isopentenyl diphosphate (IPP) and dimethylallyl diphosphate (DMAPP). Acts in the terminal step of the DOXP/MEP pathway for isoprenoid precursor biosynthesis. In Trichormus variabilis (strain ATCC 29413 / PCC 7937) (Anabaena variabilis), this protein is 4-hydroxy-3-methylbut-2-enyl diphosphate reductase.